The following is a 406-amino-acid chain: NAD(P)H-quinone oxidoreductase subunit H, organellar chromatophore (406 aa).

It belongs to the complex I 49 kDa subunit family. In terms of assembly, NDH is composed of at least 16 different subunits, 5 of which are encoded in the nucleus.

Its subcellular location is the plastid. The protein resides in the organellar chromatophore thylakoid membrane. The enzyme catalyses a quinone + NADH + H(+) = a quinol + NAD(+). In terms of biological role, NDH shuttles electrons from NAD(P)H:plastoquinone, via FMN and iron-sulfur (Fe-S) centers, to quinones in the photosynthetic chain and possibly in a chloroplast respiratory chain. The immediate electron acceptor for the enzyme in this species is believed to be plastoquinone. Couples the redox reaction to proton translocation, and thus conserves the redox energy in a proton gradient. This chain is NAD(P)H-quinone oxidoreductase subunit H, organellar chromatophore, found in Paulinella chromatophora.